We begin with the raw amino-acid sequence, 389 residues long: MDTAKVEPPQETKKTILTAQTPLSMSISSLPDEIVLSFLALISKSYYRSLSLVSKSFYSLLSSTEIYAARSHIGATEPCPYVCLWLPKKHRWFTLAEIEGKLSLEPVRLSSSYPRTRVNSTTVAAGTEIYKIGGTVKGKRSRAVFVLDCWTHRWRRAPNMRVSRVGAKSCFLDGNIYVIGGCRKSEEESMNCGEVFDLKTQTWNPLPSPSVNYAVHSNHKVAVSGERLYVITKRNNYAYDPNEGRWLPDVGSVDLQPITGPWSGGIEKVMKPITGRPWKYTWYSSSHRAWQRVMGLDVLYDKRGCGYRTIQLVNYGGKLLIIWSEWIMILDGYSLIRSQEKEIWCAVIRLEERMSYFGPQIWGEVESCNVVVPSVPKSYQLSSCQCVSV.

The 47-residue stretch at 24-70 (SMSISSLPDEIVLSFLALISKSYYRSLSLVSKSFYSLLSSTEIYAAR) folds into the F-box domain. Kelch repeat units follow at residues 128-174 (EIYK…FLDG), 176-225 (IYVI…AVSG), and 227-273 (RLYV…MKPI).

The sequence is that of Putative F-box/kelch-repeat protein At4g35120 from Arabidopsis thaliana (Mouse-ear cress).